Consider the following 2140-residue polypeptide: Dedicator of cytokinesis protein 7 (2140 aa).

3 positions are modified to phosphoserine: serine 30, serine 180, and serine 182. The interval 138-183 is disordered; it reads FNPNTLDKQKERQKGLPKQVFESDEAPDGNSYQDDQDDLKRRSMSI. Positions 365 to 395 form a coiled coil; the sequence is FKEADATKNKEKLEKLKSQADQFCQRLGKYR. Lysine 381 carries the N6-methyllysine modification. At threonine 450 the chain carries Phosphothreonine. Serine 452 bears the Phosphoserine mark. Residues 561-727 form the C2 DOCK-type domain; that stretch reads RNLLYIYPQS…GVFNVEVVAV (167 aa). Serine 862, serine 864, serine 882, serine 888, serine 896, serine 900, and serine 905 each carry phosphoserine. The span at 888-901 shows a compositional bias: low complexity; the sequence is SLNLNRSRSLSNSN. Residues 888–971 are disordered; that stretch reads SLNLNRSRSL…MSSHTETSSF (84 aa). A phosphothreonine mark is found at threonine 907 and threonine 909. Phosphoserine occurs at positions 910, 929, 964, 1383, 1390, 1394, 1398, 1421, 1425, 1429, 1430, 1432, 1434, and 1438. The segment covering 943-971 has biased composition (polar residues); that stretch reads SNPSPSAESTQAMDRSCNRMSSHTETSSF. In terms of domain architecture, DOCKER spans 1678 to 2114; it reads KGYQTSPDLR…LQPLINRKIP (437 aa). At lysine 1962 the chain carries N6-acetyllysine. Residues 2086 to 2112 are a coiled coil; sequence DQKEYQRELERNYHRLKEALQPLINRK. Serine 2129 carries the post-translational modification Phosphoserine.

The protein belongs to the DOCK family. As to quaternary structure, component of the DOCK7-induced septin displacement/DISP complex, at least composed of DOCK7, LRCH3 and MYO6. Interacts with TSC1. Interacts with nucleotide-free RAC1 and RAC3. Interacts with TACC3 and CRY1. Interacts with NOD2. As to expression, widely expressed.

Its subcellular location is the cell projection. The protein resides in the axon. Its function is as follows. Functions as a guanine nucleotide exchange factor (GEF), which activates Rac1 and Rac3 Rho small GTPases by exchanging bound GDP for free GTP. Does not have a GEF activity for CDC42. Required for STMN1 'Ser-15' phosphorylation during axon formation and consequently for neuronal polarization. As part of the DISP complex, may regulate the association of septins with actin and thereby regulate the actin cytoskeleton. Has a role in pigmentation. Involved in the regulation of cortical neurogenesis through the control of radial glial cells (RGCs) proliferation versus differentiation; negatively regulates the basal-to-apical interkinetic nuclear migration of RGCs by antagonizing the microtubule growth-promoting function of TACC3. The polypeptide is Dedicator of cytokinesis protein 7 (DOCK7) (Homo sapiens (Human)).